The following is a 733-amino-acid chain: Zinc finger transcription factor ace1 (733 aa).

Residues 1–11 (MSFSNPRRRTP) are compositionally biased toward basic residues. Disordered regions lie at residues 1–22 (MSFS…CEHG), 34–63 (GATF…SQSA), and 89–183 (ASLS…SSTT). Residues 39-49 (SPTSPSASSAA) show a composition bias toward low complexity. Basic residues predominate over residues 132 to 142 (LRPRSVRRTRN). Residues 148–158 (GIGSSVVSTND) are compositionally biased toward polar residues. The span at 171–183 (ASALTRSAASSTT) shows a compositional bias: low complexity. C2H2-type zinc fingers lie at residues 400 to 424 (KKCR…EKTH), 428 to 456 (WKCP…NDKH), and 463 to 488 (YECL…EKAH). A disordered region spans residues 497-533 (TNGKKAPSQNGSTAQQTPPLANVSTPSSTPSYSVPTP). Positions 503-515 (PSQNGSTAQQTPP) are enriched in polar residues. The span at 519–530 (VSTPSSTPSYSV) shows a compositional bias: low complexity.

It is found in the nucleus. Binds to the promoter of the cbh1 gene and activates transcription. The chain is Zinc finger transcription factor ace1 (ace1) from Hypocrea jecorina (Trichoderma reesei).